We begin with the raw amino-acid sequence, 397 residues long: Elongation factor Tu (397 aa).

Residues 10-207 (KPHVNVGTIG…TLDTYIPEPE (198 aa)) enclose the tr-type G domain. A G1 region spans residues 19–26 (GHVDHGKT). GTP is bound at residue 19–26 (GHVDHGKT). Thr26 lines the Mg(2+) pocket. The G2 stretch occupies residues 60–64 (GITIN). The G3 stretch occupies residues 81–84 (DCPG). Residues 81 to 85 (DCPGH) and 136 to 139 (NKAD) each bind GTP. Residues 136 to 139 (NKAD) form a G4 region. The tract at residues 174–176 (SAL) is G5.

The protein belongs to the TRAFAC class translation factor GTPase superfamily. Classic translation factor GTPase family. EF-Tu/EF-1A subfamily. In terms of assembly, monomer.

Its subcellular location is the cytoplasm. It carries out the reaction GTP + H2O = GDP + phosphate + H(+). Functionally, GTP hydrolase that promotes the GTP-dependent binding of aminoacyl-tRNA to the A-site of ribosomes during protein biosynthesis. The polypeptide is Elongation factor Tu (Pseudomonas fluorescens (strain ATCC BAA-477 / NRRL B-23932 / Pf-5)).